A 577-amino-acid chain; its full sequence is Arginine--tRNA ligase (577 aa).

The 'HIGH' region motif lies at 122–132; sequence PNVAKEMHVGH.

The protein belongs to the class-I aminoacyl-tRNA synthetase family. In terms of assembly, monomer.

The protein resides in the cytoplasm. It catalyses the reaction tRNA(Arg) + L-arginine + ATP = L-arginyl-tRNA(Arg) + AMP + diphosphate. This chain is Arginine--tRNA ligase, found in Salmonella newport (strain SL254).